Reading from the N-terminus, the 188-residue chain is Putative manganese efflux pump MntP (188 aa).

The next 6 membrane-spanning stretches (helical) occupy residues 3 to 23, 41 to 61, 62 to 82, 107 to 129, 143 to 163, and 168 to 188; these read LSATILLAFGMSMDAFAASIG, LIFGVIETLTPLVGWGLGMLA, SQFVLEWNHWIAFILLVFLGG, LLVTTAFATSLDAMAVGVGLAFL, ATFLMSTLGIMVGRFIGPLLG, and ILGGIVLIGIGSEILWSHFAG.

It belongs to the MntP (TC 9.B.29) family.

It is found in the cell inner membrane. Probably functions as a manganese efflux pump. This chain is Putative manganese efflux pump MntP, found in Klebsiella pneumoniae (strain 342).